Consider the following 417-residue polypeptide: DnaJ protein homolog ANJ1 (417 aa).

The J domain occupies 11–76; that stretch reads STRYYEILGV…REIYDQYGED (66 aa). The CR-type zinc-finger motif lies at 135–219; sequence GTTKKLSLSR…CKGEKVVQEK (85 aa). 3 CXXCXGXG motif repeats span residues 148–155, 164–171, and 191–198; these read CSKCTGKG, CSGCQGTG, and CNECKGTG. The CXXCXGXG motif; approximate repeat unit spans residues 207–214; that stretch reads CPQCKGEK. Residues 384–417 are disordered; sequence IEEEMKRKQTQAQQEAYDEDDEPAGGQRVQCAQQ. Cys414 carries the post-translational modification Cysteine methyl ester. The S-farnesyl cysteine moiety is linked to residue Cys414. The propeptide at 415–417 is removed in mature form; it reads AQQ.

It is found in the membrane. Functionally, plays a continuous role in plant development probably in the structural organization of compartments. This chain is DnaJ protein homolog ANJ1, found in Atriplex nummularia (Old man saltbush).